The chain runs to 215 residues: Cytochrome b6 (215 aa).

Residues 32 to 52 form a helical membrane-spanning segment; that stretch reads IFYCLGGITLTCFLVQVATGF. Cysteine 35 contacts heme c. Heme b-binding residues include histidine 86 and histidine 100. 3 helical membrane-spanning segments follow: residues 90–110, 116–136, and 186–206; these read ASMM…TGGF, LTWV…VTGY, and LHTF…FLMI. Positions 187 and 202 each coordinate heme b.

It belongs to the cytochrome b family. PetB subfamily. As to quaternary structure, the 4 large subunits of the cytochrome b6-f complex are cytochrome b6, subunit IV (17 kDa polypeptide, PetD), cytochrome f and the Rieske protein, while the 4 small subunits are PetG, PetL, PetM and PetN. The complex functions as a dimer. It depends on heme b as a cofactor. Heme c serves as cofactor.

It localises to the plastid. It is found in the chloroplast thylakoid membrane. In terms of biological role, component of the cytochrome b6-f complex, which mediates electron transfer between photosystem II (PSII) and photosystem I (PSI), cyclic electron flow around PSI, and state transitions. In Eucalyptus globulus subsp. globulus (Tasmanian blue gum), this protein is Cytochrome b6.